The primary structure comprises 201 residues: Probable calcium-binding protein CML15 (201 aa).

Positions 1–55 are disordered; the sequence is MGKVRAFFSRKGRGNSSGRSRSMREAAMNVDWSPRPSDLAAAAAAKPRPPAAEDE. EF-hand domains follow at residues 51 to 86, 87 to 122, 125 to 160, and 161 to 196; these read AAEDETERVFRKFDANGDGRISRAELAALFRSVGHA, VTDDEVARMMQEADSDGDGYISLGEFAAISAPPPGD, AAEEDLRHAFGVFDADGNGVITPAELARVLRGIGEA, and ATVAQCRRMIDGVDRNGDGLINFEEFKLMMAAGAGF. Ca(2+)-binding residues include Asp-64, Asn-66, Asp-68, Arg-70, Glu-75, Asp-100, Asp-102, Asp-104, Tyr-106, Glu-111, Asp-138, Asp-140, Asn-142, Glu-149, Asp-174, Asn-176, Asp-178, and Glu-185.

Functionally, potential calcium sensor. This is Probable calcium-binding protein CML15 (CML15) from Oryza sativa subsp. japonica (Rice).